A 407-amino-acid chain; its full sequence is MGAVPLKNNKPVEAGVRTVTVLGATGSIGDSTMDLLRGAPGRYRVEALTANSNVEALVKLAREFAARFVAVADPARFGELKDALAGSGIECGVGESAIIEAASRPADWLMAAVSGAAGLKPALAAVDRGTTIALANKECLVCAGDFFMQRAAKAGACILPADSEHNALFQALSSGNRDELTRVIITASGGPFRTWAAADIEKATLAQALKHPNWSMGRKITIDSASMMNKGLEVIEAACLFTLTPDEIDVLVHPQSIVHGMVEFSDRSVVAQLGTPDMRTPIAHCLGWPERIVGPAAKLDLASIGQLTFEAPDFTRFPALRLAYDALRTGNGATTVYNAANEIAVAAFIGEKIRFGAIARLVEATMNGWVRAGNLAPLASADDAIAIDHNARNMAASLLPQIAAKAT.

Residues Thr25, Gly26, Ser27, Ile28, Asn53, and Asn136 each contribute to the NADPH site. Position 137 (Lys137) interacts with 1-deoxy-D-xylulose 5-phosphate. An NADPH-binding site is contributed by Glu138. Asp162 contacts Mn(2+). Residues Ser163, Glu164, Ser188, and His211 each contribute to the 1-deoxy-D-xylulose 5-phosphate site. Residue Glu164 participates in Mn(2+) binding. Gly217 serves as a coordination point for NADPH. The 1-deoxy-D-xylulose 5-phosphate site is built by Ser224, Asn229, Lys230, and Glu233. Mn(2+) is bound at residue Glu233.

Belongs to the DXR family. It depends on Mg(2+) as a cofactor. Mn(2+) is required as a cofactor.

It carries out the reaction 2-C-methyl-D-erythritol 4-phosphate + NADP(+) = 1-deoxy-D-xylulose 5-phosphate + NADPH + H(+). It functions in the pathway isoprenoid biosynthesis; isopentenyl diphosphate biosynthesis via DXP pathway; isopentenyl diphosphate from 1-deoxy-D-xylulose 5-phosphate: step 1/6. Functionally, catalyzes the NADPH-dependent rearrangement and reduction of 1-deoxy-D-xylulose-5-phosphate (DXP) to 2-C-methyl-D-erythritol 4-phosphate (MEP). In Nitrobacter hamburgensis (strain DSM 10229 / NCIMB 13809 / X14), this protein is 1-deoxy-D-xylulose 5-phosphate reductoisomerase.